A 178-amino-acid chain; its full sequence is Large ribosomal subunit protein uL6 (178 aa).

It belongs to the universal ribosomal protein uL6 family. In terms of assembly, part of the 50S ribosomal subunit.

Functionally, this protein binds to the 23S rRNA, and is important in its secondary structure. It is located near the subunit interface in the base of the L7/L12 stalk, and near the tRNA binding site of the peptidyltransferase center. The chain is Large ribosomal subunit protein uL6 from Thermoplasma volcanium (strain ATCC 51530 / DSM 4299 / JCM 9571 / NBRC 15438 / GSS1).